Reading from the N-terminus, the 192-residue chain is Elongation factor P (192 aa).

This sequence belongs to the elongation factor P family.

The protein localises to the cytoplasm. Its pathway is protein biosynthesis; polypeptide chain elongation. Functionally, involved in peptide bond synthesis. Stimulates efficient translation and peptide-bond synthesis on native or reconstituted 70S ribosomes in vitro. Probably functions indirectly by altering the affinity of the ribosome for aminoacyl-tRNA, thus increasing their reactivity as acceptors for peptidyl transferase. The polypeptide is Elongation factor P (Borrelia turicatae (strain 91E135)).